Reading from the N-terminus, the 334-residue chain is O-methyltransferase SfmM3 (334 aa).

Residues Asp190 and 216 to 218 (GDF) contribute to the S-adenosyl-L-methionine site. The Proton acceptor role is filled by His236.

It belongs to the class I-like SAM-binding methyltransferase superfamily. Cation-independent O-methyltransferase family. COMT subfamily.

It carries out the reaction 5-hydroxy-3-methyl-L-tyrosine + S-adenosyl-L-methionine = 5-hydroxy-3-methyl-O-methyl-L-tyrosine + S-adenosyl-L-homocysteine + H(+). It participates in antibiotic biosynthesis. In terms of biological role, O-methyltransferase that mediates the methylation of 3-hydroxy-5-methyl-L-tyrosine (3-OH-5-Me-Tyr) into 3-hydroxy-5-methyl-O-methyltyrosine (3-OH-5-Me-OMe-Tyr), a core structure of saframycin A, a potent antitumor antibiotic that belongs to the tetrahydroisoquinoline family. The protein is O-methyltransferase SfmM3 of Streptomyces lavendulae.